Reading from the N-terminus, the 274-residue chain is Probable endonuclease LCL3 (274 aa).

The chain crosses the membrane as a helical span at residues 15 to 32 (AVLSIILTGSTLTLIYTY). A TNase-like domain is found at 53-261 (HWLYGKVTSV…RSRKKGLWIQ (209 aa)). R151 is a catalytic residue. D156 contacts Ca(2+). Residues E159 and R199 contribute to the active site.

The protein belongs to the LCL3 family.

Its subcellular location is the mitochondrion. The protein resides in the membrane. The sequence is that of Probable endonuclease LCL3 (LCL3) from Saccharomyces cerevisiae (strain Lalvin EC1118 / Prise de mousse) (Baker's yeast).